The following is a 207-amino-acid chain: Cytochrome c biogenesis ATP-binding export protein CcmA (207 aa).

Residues 4 to 207 (LEVRELLCER…RISLTQTRAV (204 aa)) form the ABC transporter domain. An ATP-binding site is contributed by 36–43 (GSNGAGKT).

It belongs to the ABC transporter superfamily. CcmA exporter (TC 3.A.1.107) family. In terms of assembly, the complex is composed of two ATP-binding proteins (CcmA) and two transmembrane proteins (CcmB).

The protein resides in the cell inner membrane. It carries out the reaction heme b(in) + ATP + H2O = heme b(out) + ADP + phosphate + H(+). Its function is as follows. Part of the ABC transporter complex CcmAB involved in the biogenesis of c-type cytochromes; once thought to export heme, this seems not to be the case, but its exact role is uncertain. Responsible for energy coupling to the transport system. This is Cytochrome c biogenesis ATP-binding export protein CcmA from Escherichia coli O157:H7.